Here is a 595-residue protein sequence, read N- to C-terminus: Actin-histidine N-methyltransferase (595 aa).

Residues 1–22 (MGKKSRVKTQKSGTGATATVSP) are disordered. Residues 10-20 (QKSGTGATATV) are compositionally biased toward polar residues. Residues R75, 104 to 106 (EGF), R254, 275 to 279 (DMCNH), and 325 to 327 (SGF) each bind S-adenosyl-L-methionine. The SET domain occupies 94–314 (EGFEMVNFKE…AGEQIYIFYG (221 aa)). S513 carries the post-translational modification Phosphoserine. Over residues 549 to 572 (ENGLVNGENSVPNGTRSENENLNQ) the composition is skewed to polar residues. The tract at residues 549–595 (ENGLVNGENSVPNGTRSENENLNQEESKRAVEDAKGSSSDNTAEVKE) is disordered. Over residues 573 to 583 (EESKRAVEDAK) the composition is skewed to basic and acidic residues. The span at 584–595 (GSSSDNTAEVKE) shows a compositional bias: polar residues.

Belongs to the class V-like SAM-binding methyltransferase superfamily. SETD3 actin-histidine methyltransferase family. As to quaternary structure, interacts with MYOD1. Phosphorylated by GSK3B, which is required for recognition by the SCF(FBXW7) complex and subsequent degradation. Post-translationally, ubiquitinated by the SCF(FBXW7) complex following phosphorylation by GSK3B, leading to its degradation by the proteasome.

The protein resides in the cytoplasm. The protein localises to the nucleus. It carries out the reaction L-histidyl-[protein] + S-adenosyl-L-methionine = N(tele)-methyl-L-histidyl-[protein] + S-adenosyl-L-homocysteine + H(+). Its function is as follows. Protein-histidine N-methyltransferase that specifically mediates 3-methylhistidine (tele-methylhistidine) methylation of actin at 'His-73'. Histidine methylation of actin is required for smooth muscle contraction of the laboring uterus during delivery. Does not have protein-lysine N-methyltransferase activity and probably only catalyzes histidine methylation of actin. This is Actin-histidine N-methyltransferase from Papio anubis (Olive baboon).